Consider the following 109-residue polypeptide: C-X-C motif chemokine 13 (109 aa).

Positions methionine 1–glycine 22 are cleaved as a signal peptide. 2 cysteine pairs are disulfide-bonded: cysteine 33/cysteine 60 and cysteine 35/cysteine 76.

It belongs to the intercrine alpha (chemokine CxC) family. As to expression, highest levels in liver, followed by spleen, lymph node, appendix and stomach. Low levels in salivary gland, mammary gland and fetal spleen.

Its subcellular location is the secreted. Its function is as follows. Chemotactic for B-lymphocytes but not for T-lymphocytes, monocytes and neutrophils. Does not induce calcium release in B-lymphocytes. Binds to BLR1/CXCR5. The sequence is that of C-X-C motif chemokine 13 (CXCL13) from Homo sapiens (Human).